The following is a 391-amino-acid chain: Processive diacylglycerol beta-glucosyltransferase (391 aa).

This sequence belongs to the glycosyltransferase 28 family. UgtP subfamily.

The protein localises to the cell membrane. It carries out the reaction a 1,2-diacyl-3-O-(beta-D-glucopyranosyl)-sn-glycerol + UDP-alpha-D-glucose = a 1,2-diacyl-3-O-(beta-D-Glc-(1-&gt;6)-beta-D-Glc)-sn-glycerol + UDP + H(+). The catalysed reaction is a 1,2-diacyl-sn-glycerol + UDP-alpha-D-glucose = a 1,2-diacyl-3-O-(beta-D-glucopyranosyl)-sn-glycerol + UDP + H(+). The protein operates within glycolipid metabolism; diglucosyl-diacylglycerol biosynthesis. Its function is as follows. Processive glucosyltransferase involved in the biosynthesis of both the bilayer- and non-bilayer-forming membrane glucolipids. Is able to successively transfer two glucosyl residues to diacylglycerol (DAG), thereby catalyzing the formation of beta-monoglucosyl-DAG (3-O-(beta-D-glucopyranosyl)-1,2-diacyl-sn-glycerol) and beta-diglucosyl-DAG (3-O-(beta-D-glucopyranosyl-beta-(1-&gt;6)-D-glucopyranosyl)-1,2-diacyl-sn-glycerol). Beta-diglucosyl-DAG is the predominant glycolipid found in Bacillales and is also used as a membrane anchor for lipoteichoic acid (LTA). The protein is Processive diacylglycerol beta-glucosyltransferase of Staphylococcus carnosus (strain TM300).